Reading from the N-terminus, the 3364-residue chain is Salivary gland surface protein 1 (3364 aa).

Beta-propeller stretches follow at residues 1–344 (MLRI…VVDA) and 705–1216 (FEQE…LKAL). Asn-59 is a glycosylation site (N-linked (GlcNAc...) asparagine). 2 disulfides stabilise this stretch: Cys-251/Cys-297 and Cys-1128/Cys-1139. The rhs/YD-repeats stretch occupies residues 345-2733 (VEPKLDQGSP…PVSQIDPDGQ (2389 aa)). N-linked (GlcNAc...) asparagine glycosylation occurs at Asn-1149. The segment at 1345-1494 (NQELVQFLGF…VHVDHVRLSP (150 aa)) is carbohydrate-binding module (CBM). Residues 1575–1715 (HSWVESFSPY…VGIKDVIVME (141 aa)) are lectin carbohydrate-recognition domain (lectin-CRD). Positions 2225–2304 (HDKCDQNLIP…SEKMLEQGYP (80 aa)) are wedge domain. 2 disulfide bridges follow: Cys-2253–Cys-2285 and Cys-2407–Cys-2421. The next 5 membrane-spanning stretches (helical) occupy residues 2734-2754 (IAVT…LGAA), 2774-2794 (IGLF…AATF), 2805-2825 (MIAG…LGAA), 2844-2864 (WNGL…FVGI), and 2878-2898 (MIYA…GGGM). The segment at 3126-3216 (YSPDSDGNQI…ARIAPAALRN (91 aa)) is tox-SGS.

Post-translationally, probably cleaved at the C-terminus. As to expression, female saliva (at protein level). Female salivary gland (at protein level). Not detected in female carcass without salivary glands. Not detected in male tissues.

Its subcellular location is the cell membrane. It is found in the secreted. Functionally, (Microbial infection) Facilitates, but is not essential for, invasion of salivary glands by Plasmodium gallinaceum. Plays a role in Plasmodium gallinaceum oocyst development in mosquito midgut. Its function is as follows. (Microbial infection) Probably facilitates Zika virus replication in salivary glands. The polypeptide is Salivary gland surface protein 1 (Aedes aegypti (Yellowfever mosquito)).